The sequence spans 134 residues: Small ribosomal subunit protein uS9c (134 aa).

This sequence belongs to the universal ribosomal protein uS9 family.

The protein localises to the plastid. It is found in the chloroplast. This is Small ribosomal subunit protein uS9c (rps9) from Guillardia theta (Cryptophyte).